A 62-amino-acid chain; its full sequence is MFPMKKSLLLLFFFGPISLSFCDQERGADEEENGGEVTEQEVKRNILSSIVNGINRALSFFG.

Residues 1–22 (MFPMKKSLLLLFFFGPISLSFC) form the signal peptide. The propeptide occupies 23–44 (DQERGADEEENGGEVTEQEVKR).

As to expression, expressed by the skin glands.

It localises to the secreted. Its function is as follows. Antimicrobial peptide with activity against Gram-positive bacteria. Has been tested against S.aureus (MIC=37.5 ug/mL), against B.pumilus (MIC=75.0 ug/mL), B.cereus (no activity detected). Does not show activity against Gram-negative bacteria (E.coli, B.dysenteriae, A.calcoaceticus, P.aeruginosa) and fungi (C.albicans). Does not show hemolytic activity against rabbit erythrocytes. This is Amolopin-P1 from Amolops loloensis (Lolokou Sucker Frog).